The sequence spans 389 residues: Coproporphyrin III ferrochelatase (389 aa).

2 residues coordinate Fe-coproporphyrin III: Ser-70 and Tyr-139. Residue His-205 participates in Fe(2+) binding. Residues 207 to 229 (IPSTDAGKSGPSGRPDSGEPWGE) form a disordered region. Glu-303 is a binding site for Fe(2+).

Belongs to the ferrochelatase family.

The protein resides in the cytoplasm. The enzyme catalyses Fe-coproporphyrin III + 2 H(+) = coproporphyrin III + Fe(2+). The protein operates within porphyrin-containing compound metabolism; protoheme biosynthesis. In terms of biological role, involved in coproporphyrin-dependent heme b biosynthesis. Catalyzes the insertion of ferrous iron into coproporphyrin III to form Fe-coproporphyrin III. In Leifsonia xyli subsp. xyli (strain CTCB07), this protein is Coproporphyrin III ferrochelatase.